The sequence spans 361 residues: DNA-(apurinic or apyrimidinic site) endonuclease (361 aa).

The disordered stretch occupies residues 1-90 (MTSRTKKLKM…TNKTTASVSI (90 aa)). Positions 25–39 (TSEEEKEEVEEEEEE) are enriched in acidic residues. The short motif at 41–44 (KKRK) is the Nuclear localization signal element. A compositionally biased stretch (basic residues) spans 43–64 (RKLVKKTPAKKAPAKKAAAKKK). Positions 68-80 (EDEDEEEKEEEEE) are enriched in acidic residues. Glu-139 lines the Mg(2+) pocket. Tyr-211 is a catalytic residue. Asp-252, Asn-254, and Asp-350 together coordinate Mg(2+). Catalysis depends on Asp-252, which acts as the Proton donor/acceptor.

The protein belongs to the DNA repair enzymes AP/ExoA family. Mg(2+) is required as a cofactor. Requires Mn(2+) as cofactor.

The protein resides in the nucleus. This chain is DNA-(apurinic or apyrimidinic site) endonuclease (apeA), found in Dictyostelium discoideum (Social amoeba).